The chain runs to 880 residues: Beta-N-acetylglucosaminidase (880 aa).

A signal peptide spans 1–27; that stretch reads MKKRLIAPMLLSAASLAFFAMSGSAQA. SPOR domains lie at 70–149, 150–229, and 230–311; these read SGTT…VKAY, GAAQ…LKET, and VKGQ…YQQV. 2 tandem repeats follow at residues 439-473 and 479-513. An SH3b domain is found at 630-700; it reads TATSTVTADV…VDPNNFSRDS (71 aa).

This sequence belongs to the glycosyl hydrolase 73 family. As to quaternary structure, homodimer.

It is found in the secreted. The protein resides in the cell wall. The enzyme catalyses an N(4)-(oligosaccharide-(1-&gt;3)-[oligosaccharide-(1-&gt;6)]-beta-D-Man-(1-&gt;4)-beta-D-GlcNAc-(1-&gt;4)-alpha-D-GlcNAc)-L-asparaginyl-[protein] + H2O = an oligosaccharide-(1-&gt;3)-[oligosaccharide-(1-&gt;6)]-beta-D-Man-(1-&gt;4)-D-GlcNAc + N(4)-(N-acetyl-beta-D-glucosaminyl)-L-asparaginyl-[protein]. Inhibited by diethyl pyrocarbonate, slightly by EDTA. Not inhibited by PMSF, diisopropyl fluorophosphate, 2-mercaptoethanol or N-ethylmaleimide. Functionally, cell wall hydrolase not involved in cell autolysis, competence, sporulation or germination. It hydrolyzes the beta-1,4 glycan bond between the N-acetylglucosaminyl and the N-acetylmuramoyl residues in the glycan chain. The chain is Beta-N-acetylglucosaminidase (lytD) from Bacillus subtilis (strain 168).